We begin with the raw amino-acid sequence, 113 residues long: ATP-dependent Clp protease adapter protein ClpS (113 aa).

Residues Met1–Pro26 form a disordered region.

It belongs to the ClpS family. In terms of assembly, binds to the N-terminal domain of the chaperone ClpA.

In terms of biological role, involved in the modulation of the specificity of the ClpAP-mediated ATP-dependent protein degradation. This Ruegeria sp. (strain TM1040) (Silicibacter sp.) protein is ATP-dependent Clp protease adapter protein ClpS.